The chain runs to 64 residues: Potassium channel toxin kappa-KTx 3.4 (64 aa).

An N-terminal signal peptide occupies residues methionine 1–alanine 26. A propeptide spanning residues glutamate 27–glutamate 36 is cleaved from the precursor. Intrachain disulfides connect cysteine 43/cysteine 61 and cysteine 47/cysteine 57.

The protein belongs to the short scorpion toxin superfamily. Potassium channel inhibitor kappa-KTx family. Kappa-KTx 3 subfamily. Expressed by the venom gland.

It is found in the secreted. Functionally, potassium channel inhibitor (Kv). This is Potassium channel toxin kappa-KTx 3.4 from Heterometrus petersii (Asian forest scorpion).